A 290-amino-acid chain; its full sequence is Shikimate dehydrogenase (NADP(+)) (290 aa).

Residues 24–26 and Thr-71 contribute to the shikimate site; that span reads SLS. Lys-75 acts as the Proton acceptor in catalysis. 2 residues coordinate shikimate: Asn-96 and Asp-111. NADP(+)-binding positions include 136–140, 160–165, and Leu-233; these read GAGGA and NRTVDR. Residue Tyr-235 participates in shikimate binding. Gly-256 is an NADP(+) binding site.

Belongs to the shikimate dehydrogenase family. Homodimer.

The catalysed reaction is shikimate + NADP(+) = 3-dehydroshikimate + NADPH + H(+). Its pathway is metabolic intermediate biosynthesis; chorismate biosynthesis; chorismate from D-erythrose 4-phosphate and phosphoenolpyruvate: step 4/7. Involved in the biosynthesis of the chorismate, which leads to the biosynthesis of aromatic amino acids. Catalyzes the reversible NADPH linked reduction of 3-dehydroshikimate (DHSA) to yield shikimate (SA). In Methanopyrus kandleri (strain AV19 / DSM 6324 / JCM 9639 / NBRC 100938), this protein is Shikimate dehydrogenase (NADP(+)).